Reading from the N-terminus, the 150-residue chain is Galectin-2 (150 aa).

One can recognise a Galectin domain in the interval 9–141 (NQVKLQNDFK…FSSPVTVDVH (133 aa)). A carbohydrate-binding residues include His51, Arg55, Asn64, Glu75, and Arg77.

As to quaternary structure, homotetramer. Oligomerization is required for carbohydrate binding.

It localises to the secreted. The protein resides in the extracellular space. Its subcellular location is the extracellular matrix. The protein localises to the cell wall. It is found in the endomembrane system. In terms of biological role, binds lactose. May play a role in fruiting body formation. Displays toxicity towards the nematode C.elegans by binding to a specific Gal-beta-1,4-Fuc-alpha-1,6 modification of N-glycan cores on C.elegans intestinal cells. The polypeptide is Galectin-2 (Cgl2) (Coprinopsis cinerea (Inky cap fungus)).